The sequence spans 606 residues: Anthranilate synthase alpha subunit 2, chloroplastic (606 aa).

A chloroplast-targeting transit peptide spans 1 to 49; sequence MESIAAATFTPSRLAARPATPAAAAAPVRARAAVAAGGRRRTSRRGGVR.

This sequence belongs to the anthranilate synthase component I family. Heterotetramer consisting of two non-identical subunits: a beta subunit and a large alpha subunit.

It localises to the plastid. Its subcellular location is the chloroplast. The catalysed reaction is chorismate + L-glutamine = anthranilate + pyruvate + L-glutamate + H(+). Its pathway is amino-acid biosynthesis; L-tryptophan biosynthesis; L-tryptophan from chorismate: step 1/5. With respect to regulation, feedback inhibition by tryptophan. Functionally, part of a heterotetrameric complex that catalyzes the two-step biosynthesis of anthranilate, an intermediate in the biosynthesis of L-tryptophan. In the first step, the glutamine-binding beta subunit of anthranilate synthase (AS) provides the glutamine amidotransferase activity which generates ammonia as a substrate that, along with chorismate, is used in the second step, catalyzed by the large alpha subunit of AS to produce anthranilate. This chain is Anthranilate synthase alpha subunit 2, chloroplastic, found in Oryza sativa subsp. japonica (Rice).